The primary structure comprises 1092 residues: Extended synaptotagmin-1 (1092 aa).

An N-acetylmethionine modification is found at methionine 1. Residues 1-28 (MEHSPEEGASPEPSGQPPATDSTRDGGS) lie on the Cytoplasmic side of the membrane. The disordered stretch occupies residues 1–36 (MEHSPEEGASPEPSGQPPATDSTRDGGSGVPPAGPG). Residues 29–49 (GVPPAGPGAASEALAVLTSFG) form a helical membrane-spanning segment. Over 50-52 (RRL) the chain is Lumenal. Residues 53–73 (LVLVPVYLAGAAGLSVGFVLF) traverse the membrane as a helical segment. At 74–1092 (GLALYLGWRR…LMDDRDKGGS (1019 aa)) the chain is on the cytoplasmic side. One can recognise an SMP-LTD domain in the interval 125–303 (DVEKAEWLNK…LPNRLLVPLV (179 aa)). 4 consecutive C2 domains span residues 302 to 423 (LVPD…DNWY), 444 to 570 (DAEK…QLSS), 616 to 738 (DAPP…DEWL), and 769 to 886 (QVNS…ALSG). Serine 314 bears the Phosphoserine; by CDK5 mark. Ca(2+) contacts are provided by lysine 334, aspartate 335, aspartate 347, aspartate 394, aspartate 396, aspartate 398, aspartate 400, and aspartate 401. The tract at residues 604-628 (WDRESLETGSSVDAPPRPYHTTPNS) is disordered. Position 804 is an N6-acetyllysine (lysine 804). Serine 807 carries the phosphoserine modification. The tract at residues 909 to 937 (HSHSYSHSHSSSSLNDEPEALGGPTHPAS) is disordered. Positions 911 to 921 (HSYSHSHSSSS) are enriched in low complexity. 2 positions are modified to phosphoserine: serine 937 and serine 951. The 123-residue stretch at 959–1081 (PLGQVKLTVW…DLSQGAAQWY (123 aa)) folds into the C2 5 domain. Tyrosine 997 is subject to Phosphotyrosine. Positions 1006–1013 (KNRSTKRK) are required for phosphatidylinositol 4,5-bisphosphate-dependent location at the cell membrane.

This sequence belongs to the extended synaptotagmin family. In terms of assembly, interacts with ESYT2 and ESYT3. Interacts with ADGRD1; inhibiting the G-protein-coupled receptor activity of ADGRD1. Interaction with ADGRD1 is abolished when cytosolic calcium increases, relieving ADGRD1 G-protein-coupled receptor activity. Interacts (phosphorylated form) with SLC2A4. Phosphorylated on Ser residues in insulin-treated adipocytes (in vitro); this promotes interaction with SLC2A4.

Its subcellular location is the endoplasmic reticulum membrane. The protein resides in the cell membrane. In terms of biological role, binds calcium (via the C2 domains) and translocates to sites of contact between the endoplasmic reticulum and the cell membrane in response to increased cytosolic calcium levels. Helps tether the endoplasmic reticulum to the cell membrane and promotes the formation of appositions between the endoplasmic reticulum and the cell membrane. Acts as an inhibitor of ADGRD1 G-protein-coupled receptor activity in absence of cytosolic calcium. Binds glycerophospholipids in a barrel-like domain and may play a role in cellular lipid transport. This is Extended synaptotagmin-1 (Esyt1) from Mus musculus (Mouse).